Reading from the N-terminus, the 854-residue chain is Transcription factor asR3 (854 aa).

Positions 19 to 45 (CWECRRRKIKCDRNDPCAHCIRHETQC) form a DNA-binding region, zn(2)-C6 fungal-type. Residues 56–156 (TDSDVSRTRP…SLSTNTSPSA (101 aa)) are disordered. Polar residues-rich tracts occupy residues 78 to 90 (ASGS…TRPS) and 125 to 145 (LNPS…SSRG). The segment covering 146-156 (PSLSTNTSPSA) has biased composition (low complexity).

Its subcellular location is the nucleus. In terms of biological role, transcription factor; part of the gene cluster that mediates the biosynthesis of xenovulene A, an unusual meroterpenoid that has potent inhibitory effects on the human gamma-aminobutyrate A (GABAA) benzodiazepine receptor. This is Transcription factor asR3 from Sarocladium schorii (Acremonium strictum (strain IMI 501407)).